A 176-amino-acid polypeptide reads, in one-letter code: 3-hydroxydecanoyl-[acyl-carrier-protein] dehydratase (176 aa).

Residue His-75 is part of the active site.

The protein belongs to the thioester dehydratase family. FabA subfamily. In terms of assembly, homodimer.

It localises to the cytoplasm. It catalyses the reaction a (3R)-hydroxyacyl-[ACP] = a (2E)-enoyl-[ACP] + H2O. The enzyme catalyses (3R)-hydroxydecanoyl-[ACP] = (2E)-decenoyl-[ACP] + H2O. It carries out the reaction (2E)-decenoyl-[ACP] = (3Z)-decenoyl-[ACP]. The protein operates within lipid metabolism; fatty acid biosynthesis. Its function is as follows. Necessary for the introduction of cis unsaturation into fatty acids. Catalyzes the dehydration of (3R)-3-hydroxydecanoyl-ACP to E-(2)-decenoyl-ACP and then its isomerization to Z-(3)-decenoyl-ACP. Can catalyze the dehydratase reaction for beta-hydroxyacyl-ACPs with saturated chain lengths up to 16:0, being most active on intermediate chain length. The chain is 3-hydroxydecanoyl-[acyl-carrier-protein] dehydratase from Haemophilus ducreyi (strain 35000HP / ATCC 700724).